The chain runs to 204 residues: Anthranilate synthase component 2 (204 aa).

In terms of domain architecture, Glutamine amidotransferase type-1 spans 13 to 204; sequence RVLVVDNYDS…KNFLEDPWTR (192 aa). 64 to 66 lines the L-glutamine pocket; sequence GPC. The active-site Nucleophile; for GATase activity is C91. L-glutamine contacts are provided by residues Q95 and 141–142; that span reads SL. Residues H181 and E183 each act as for GATase activity in the active site.

As to quaternary structure, heterotetramer consisting of two non-identical subunits: a beta subunit (TrpG) and a large alpha subunit (TrpE).

The enzyme catalyses chorismate + L-glutamine = anthranilate + pyruvate + L-glutamate + H(+). It participates in amino-acid biosynthesis; L-tryptophan biosynthesis; L-tryptophan from chorismate: step 1/5. Part of a heterotetrameric complex that catalyzes the two-step biosynthesis of anthranilate, an intermediate in the biosynthesis of L-tryptophan. In the first step, the glutamine-binding beta subunit (TrpG) of anthranilate synthase (AS) provides the glutamine amidotransferase activity which generates ammonia as a substrate that, along with chorismate, is used in the second step, catalyzed by the large alpha subunit of AS (TrpE) to produce anthranilate. In the absence of TrpG, TrpE can synthesize anthranilate directly from chorismate and high concentrations of ammonia. This Thermus thermophilus (strain ATCC 27634 / DSM 579 / HB8) protein is Anthranilate synthase component 2 (trpG).